The sequence spans 406 residues: Argininosuccinate synthase (406 aa).

Residues 13–21 (AYSGGLDTS) and Ala-40 contribute to the ATP site. Tyr-91 and Ser-96 together coordinate L-citrulline. Residue Gly-121 coordinates ATP. 3 residues coordinate L-aspartate: Thr-123, Asn-127, and Asp-128. Asn-127 contributes to the L-citrulline binding site. Arg-131, Ser-182, Ser-191, Glu-267, and Tyr-279 together coordinate L-citrulline.

It belongs to the argininosuccinate synthase family. Type 1 subfamily. In terms of assembly, homotetramer.

The protein resides in the cytoplasm. It catalyses the reaction L-citrulline + L-aspartate + ATP = 2-(N(omega)-L-arginino)succinate + AMP + diphosphate + H(+). It participates in amino-acid biosynthesis; L-arginine biosynthesis; L-arginine from L-ornithine and carbamoyl phosphate: step 2/3. The polypeptide is Argininosuccinate synthase (Brucella anthropi (strain ATCC 49188 / DSM 6882 / CCUG 24695 / JCM 21032 / LMG 3331 / NBRC 15819 / NCTC 12168 / Alc 37) (Ochrobactrum anthropi)).